We begin with the raw amino-acid sequence, 88 residues long: MARVTVEDCLPMVDNRFALVLLATKRTRQLMAGARPLQAASKNKPPVLALREIATGKVRFDRSVRDALSGKFDKEKVNIPAGQTRTLR.

Belongs to the RNA polymerase subunit omega family. The RNAP catalytic core consists of 2 alpha, 1 beta, 1 beta' and 1 omega subunit. When a sigma factor is associated with the core the holoenzyme is formed, which can initiate transcription.

The enzyme catalyses RNA(n) + a ribonucleoside 5'-triphosphate = RNA(n+1) + diphosphate. Its function is as follows. Promotes RNA polymerase assembly. Latches the N- and C-terminal regions of the beta' subunit thereby facilitating its interaction with the beta and alpha subunits. This Anaeromyxobacter dehalogenans (strain 2CP-1 / ATCC BAA-258) protein is DNA-directed RNA polymerase subunit omega.